The sequence spans 111 residues: Flagellar hook-basal body complex protein FliE (111 aa).

Belongs to the FliE family.

Its subcellular location is the bacterial flagellum basal body. In Brucella ovis (strain ATCC 25840 / 63/290 / NCTC 10512), this protein is Flagellar hook-basal body complex protein FliE.